The following is a 276-amino-acid chain: F-actin-capping protein subunit beta (276 aa).

It belongs to the F-actin-capping protein beta subunit family. As to quaternary structure, component of the F-actin capping complex, composed of a heterodimer of an alpha and a beta subunit. Subunit of dynactin, a multiprotein complex part of a tripartite complex with dynein and a adapter, such as BICDL1, BICD2 or HOOK3.

The protein localises to the cytoplasm. The protein resides in the cytoskeleton. Its function is as follows. F-actin-capping proteins bind in a Ca(2+)-independent manner to the fast growing ends of actin filaments (barbed end) thereby blocking the exchange of subunits at these ends. Unlike other capping proteins (such as gelsolin and severin), these proteins do not sever actin filaments. Forms, with CAPZB, the barbed end of the fast growing ends of actin filaments in the dynactin complex and stabilizes dynactin structure. The dynactin multiprotein complex activates the molecular motor dynein for ultra-processive transport along microtubules. The chain is F-actin-capping protein subunit beta (cpb) from Drosophila melanogaster (Fruit fly).